The chain runs to 675 residues: Zeaxanthin epoxidase, chloroplastic (675 aa).

Residues 1-25 (MASTVLYNSLTTSTTVFLRSHLPIS) constitute a chloroplast transit peptide. Residues 92 to 120 (RILVAGGGIGGLVFALAAKKRGFDVKVFE) and 370 to 383 (KLTWGQGRVTLLGD) contribute to the FAD site. The FHA domain maps to 558 to 622 (ICLSRKEDEP…HGTWITDNEG (65 aa)).

Requires FAD as cofactor.

Its subcellular location is the plastid. It is found in the chloroplast thylakoid membrane. It catalyses the reaction all-trans-zeaxanthin + 4 reduced [2Fe-2S]-[ferredoxin] + 2 O2 + 4 H(+) = all-trans-violaxanthin + 4 oxidized [2Fe-2S]-[ferredoxin] + 2 H2O. It functions in the pathway plant hormone biosynthesis; abscisate biosynthesis. With respect to regulation, inhibited by diphenyleneiodonium (DPI). Its function is as follows. Converts zeaxanthin into antheraxanthin and subsequently violaxanthin. Involved in the epoxidation of zeaxanthin. This is Zeaxanthin epoxidase, chloroplastic from Spinacia oleracea (Spinach).